Here is a 929-residue protein sequence, read N- to C-terminus: von Willebrand factor C and EGF domain-containing protein (929 aa).

Residues 1 to 21 (MWARLLLHVAYILIPLLGSSA) form the signal peptide. Residues 70-98 (LCSFGCGSGICIAPNVCSCQDGEQGATCP) form the EGF-like 1 domain. Positions 142-180 (DIDECLSSSCEGHCVNTEGGFVCECGPGMQLSADRHSCQ) constitute an EGF-like 2; calcium-binding domain. 9 disulfides stabilise this stretch: Cys-146-Cys-155, Cys-151-Cys-164, Cys-166-Cys-179, Cys-185-Cys-194, Cys-190-Cys-203, Cys-205-Cys-218, Cys-224-Cys-237, Cys-233-Cys-246, and Cys-248-Cys-261. The EGF-like 3; calcium-binding domain maps to 181 to 219 (DTDECLGTPCQQRCKNSIGSYKCSCRAGFHLHGNRHSCI). Positions 220 to 262 (DVNECRRPQERRVCHHTCHNTVGSFLCTCRPGFRLRSDRVSCE) constitute an EGF-like 4; calcium-binding domain. Disordered regions lie at residues 291 to 317 (AGRPALSPGHSPPPGAPGYPTGVRTIS) and 339 to 374 (PSSSPLGTLGPPSLLQGAVGTPSSPRGPESPKLGAG). The span at 339 to 353 (PSSSPLGTLGPPSLL) shows a compositional bias: low complexity. 6 consecutive VWFC domains span residues 376-433 (SSCW…PSCT), 433-494 (TGCF…GRCY), 491-552 (GRCY…FTCR), 558-618 (TGCS…PDCS), 619-677 (AGCT…PVCH), and 677-762 (HDCN…VNCS). 2 N-linked (GlcNAc...) asparagine glycosylation sites follow: Asn-454 and Asn-464. The segment at 731–774 (PLEEKQQPSPHGELAKAARNARGDTEVPVNCSSCPGPPSASPTR) is disordered. Residues 743 to 755 (ELAKAARNARGDT) are compositionally biased toward basic and acidic residues. Residue Asn-787 is glycosylated (N-linked (GlcNAc...) asparagine). Positions 791 to 807 (IQSASPSPPIAQTSSSP) are enriched in polar residues. 2 disordered regions span residues 791–861 (IQSA…SSTF) and 879–929 (AETP…NSTI). Over residues 889 to 903 (LSETLTTSSSSQRLS) the composition is skewed to low complexity.

Its subcellular location is the secreted. May be a regulatory element in the beta-catenin signaling pathway and a target for chemoprevention of hapatocellular carcinoma. The chain is von Willebrand factor C and EGF domain-containing protein (Vwce) from Mus musculus (Mouse).